Here is a 263-residue protein sequence, read N- to C-terminus: 3-methyl-2-oxobutanoate hydroxymethyltransferase (263 aa).

The Mg(2+) site is built by aspartate 45 and aspartate 84. 3-methyl-2-oxobutanoate-binding positions include 45 to 46 (DS), aspartate 84, and lysine 112. Glutamate 114 contacts Mg(2+). Catalysis depends on glutamate 180, which acts as the Proton acceptor.

This sequence belongs to the PanB family. Homodecamer; pentamer of dimers. Requires Mg(2+) as cofactor.

The protein resides in the cytoplasm. It carries out the reaction 3-methyl-2-oxobutanoate + (6R)-5,10-methylene-5,6,7,8-tetrahydrofolate + H2O = 2-dehydropantoate + (6S)-5,6,7,8-tetrahydrofolate. The protein operates within cofactor biosynthesis; (R)-pantothenate biosynthesis; (R)-pantoate from 3-methyl-2-oxobutanoate: step 1/2. In terms of biological role, catalyzes the reversible reaction in which hydroxymethyl group from 5,10-methylenetetrahydrofolate is transferred onto alpha-ketoisovalerate to form ketopantoate. The chain is 3-methyl-2-oxobutanoate hydroxymethyltransferase from Salmonella arizonae (strain ATCC BAA-731 / CDC346-86 / RSK2980).